Consider the following 192-residue polypeptide: Type-4 uracil-DNA glycosylase (192 aa).

Positions 18 and 21 each coordinate [4Fe-4S] cluster. Uracil-binding positions include 45–47, Phe-59, and Asn-85; that span reads GEG. Cys-89 and Cys-105 together coordinate [4Fe-4S] cluster. His-161 is a binding site for uracil.

It belongs to the uracil-DNA glycosylase (UDG) superfamily. Type 4 (UDGa) family.

The enzyme catalyses Hydrolyzes single-stranded DNA or mismatched double-stranded DNA and polynucleotides, releasing free uracil.. In terms of biological role, removes uracil bases that are present in DNA as a result of either deamination of cytosine or misincorporation of dUMP instead of dTMP. Can remove uracil from double-stranded DNA containing either a U/G or U/A base pair as well as from single-stranded DNA. The chain is Type-4 uracil-DNA glycosylase from Thermotoga maritima (strain ATCC 43589 / DSM 3109 / JCM 10099 / NBRC 100826 / MSB8).